The sequence spans 119 residues: MSYIQKQGKNTAWRVALMRNLTSELIVSERLEITETRAKELRKHLDKMVTLAKRGDLHARRQAASWLRNIEASSKEDVLQKLFTTIAKKYKDRDGGYTRILKLDNRKGDNAPMVIIELV.

The protein belongs to the bacterial ribosomal protein bL17 family. Part of the 50S ribosomal subunit. Contacts protein L32.

The sequence is that of Large ribosomal subunit protein bL17 from Mesoplasma florum (strain ATCC 33453 / NBRC 100688 / NCTC 11704 / L1) (Acholeplasma florum).